A 171-amino-acid polypeptide reads, in one-letter code: Probable chorismate pyruvate-lyase (171 aa).

Residues M36, R78, L116, and E157 each contribute to the substrate site.

The protein belongs to the UbiC family.

It localises to the cytoplasm. It carries out the reaction chorismate = 4-hydroxybenzoate + pyruvate. It participates in cofactor biosynthesis; ubiquinone biosynthesis. In terms of biological role, removes the pyruvyl group from chorismate, with concomitant aromatization of the ring, to provide 4-hydroxybenzoate (4HB) for the ubiquinone pathway. The sequence is that of Probable chorismate pyruvate-lyase from Bartonella bacilliformis (strain ATCC 35685 / KC583 / Herrer 020/F12,63).